The following is a 73-amino-acid chain: Nodulin-1 (73 aa).

An N-terminal signal peptide occupies residues 1-23 (MERKTLASLCFFLIVLLAAQVVA). Disulfide bonds link cysteine 39/cysteine 64, cysteine 49/cysteine 71, and cysteine 53/cysteine 73.

Expressed in nodules, but not in leaves, stems, flowers and roots. In developing nodules, expressed close to the infection threads.

It is found in the secreted. Nodulation-related protein probably involved in the infection process. The sequence is that of Nodulin-1 (N1) from Medicago truncatula (Barrel medic).